Reading from the N-terminus, the 563-residue chain is Forkhead box protein O (563 aa).

Disordered regions lie at residues 1–72 (MDDF…DPQQ) and 177–243 (KSVR…SYQL). At Thr43 the chain carries Phosphothreonine; by PKB/AKT1. Residues 58-72 (TKASNQQLANGDPQQ) show a composition bias toward polar residues. The fork-head DNA-binding region spans 90-196 (WGNLSYADLI…ETSRYEKRRG (107 aa)). The residue at position 185 (Ser185) is a Phosphoserine; by PKB/AKT1. The segment covering 216–225 (ATPSPSSSVS) has biased composition (polar residues). A Phosphoserine; by PKB/AKT1 modification is found at Ser253. Phosphoserine occurs at positions 256, 257, and 262. Positions 317-371 (AASGLPTQPPPPYQPPQHPQHTQGYALNGPGLSPNSVTTTMSPAYPNSEPSSDSL) are disordered. Over residues 323–334 (TQPPPPYQPPQH) the composition is skewed to pro residues. A compositionally biased stretch (polar residues) spans 349-358 (SPNSVTTTMS).

Interacts with melt.

It localises to the cytoplasm. The protein resides in the nucleus. In terms of biological role, transcription factor involved in the regulation of the insulin signaling pathway. Consistently activates both the downstream target Thor\d4EBP and the feedback control target InR. Involved in negative regulation of the cell cycle, modulating cell growth and proliferation. In response to cellular stresses, such as nutrient deprivation or increased levels of reactive oxygen species, foxo is activated and inhibits growth through the action of target genes such as Thor. Foxo activated in the adult fat body can regulate lifespan in adults; an insulin peptide itself may function as one secondary messenger of insulin-regulated aging. Also regulates Lip4, homolog of human acid lipases, thereby acting as a key modulator of lipid metabolism by insulin signaling and integrates insulin responses to glucose and lipid homeostasis. This is Forkhead box protein O from Drosophila mojavensis (Fruit fly).